We begin with the raw amino-acid sequence, 352 residues long: MDDNKKKALAAALGQIERQFGKGAVMRMGDHDRQAIPAISTGSLGLDIALGIGGLPKGRIVEIYGPESSGKTTLTLSVIAQAQKMGATCAFVDAEHALDPEYAGKLGVNVDDLLVSQPDTGEQALEITDMLVRSNAIDVIVVDSVAALVPKAEIEGEMGDMHVGLQARLMSQALRKITGNIKNANCLVIFINQIRMKIGVMFGSPETTTGGNALKFYASVRLDIRRTGAVKEGDEVVGSETRVKVVKNKVAPPFRQAEFQILYGKGIYLNGEMIDLGVLHGFVEKSGAWYAYNGSKIGQGKANSAKFLADNPDIAATLEKQIRDKLLTAAPDVKAAANREPVAEVEEADTDI.

Position 65–72 (65–72 (GPESSGKT)) interacts with ATP.

The protein belongs to the RecA family.

The protein resides in the cytoplasm. Its function is as follows. Can catalyze the hydrolysis of ATP in the presence of single-stranded DNA, the ATP-dependent uptake of single-stranded DNA by duplex DNA, and the ATP-dependent hybridization of homologous single-stranded DNAs. It interacts with LexA causing its activation and leading to its autocatalytic cleavage. The chain is Protein RecA from Pseudomonas fluorescens (strain SBW25).